We begin with the raw amino-acid sequence, 299 residues long: GTPase Era (299 aa).

Positions 4–171 constitute an Era-type G domain; sequence KSGFVAILGR…VDILSENLGE (168 aa). The interval 12 to 19 is G1; sequence GRPNVGKS. 12–19 provides a ligand contact to GTP; it reads GRPNVGKS. Residues 38–42 form a G2 region; sequence QTTRN. Residues 59 to 62 form a G3 region; sequence DTPG. Residues 59–63 and 121–124 each bind GTP; these read DTPGI and NKID. A G4 region spans residues 121 to 124; the sequence is NKID. The tract at residues 150–152 is G5; the sequence is ISA. In terms of domain architecture, KH type-2 spans 202–280; that stretch reads TREEIPHSVA…FLETWVKVKK (79 aa).

Belongs to the TRAFAC class TrmE-Era-EngA-EngB-Septin-like GTPase superfamily. Era GTPase family. In terms of assembly, monomer.

The protein resides in the cytoplasm. It localises to the cell membrane. Its function is as follows. An essential GTPase that binds both GDP and GTP, with rapid nucleotide exchange. Plays a role in 16S rRNA processing and 30S ribosomal subunit biogenesis and possibly also in cell cycle regulation and energy metabolism. In Streptococcus pneumoniae (strain JJA), this protein is GTPase Era.